The following is a 518-amino-acid chain: Serine incorporator 4 (518 aa).

10 consecutive transmembrane segments (helical) span residues 59–79 (CSRLFYILLHVGASAICCLLL), 122–142 (VCAGTATFHLLQAVLLVHLHS), 153–173 (SFWLLKLLFLLGLCAIAFCIP), 184–204 (IGICGGFAFILLQLVLITAFA), 222–242 (FLAVLLATLGFYSMAGVGAVL), 259–279 (LLSLHLCFCGLISFLSIAPCI), 286–306 (SGLLQASVISCYIMYLTFSAL), 338–357 (ISLAMLSASIMYACVLFACN), 427–447 (AFHFVFFLASLYVMVTLTNWF), and 470–490 (VASCWACVLLYLGLLLAPLCW).

The protein belongs to the TDE1 family.

Its subcellular location is the membrane. Functionally, incorporates a polar amino acid serine into membranes and facilitates the synthesis of two serine-derived lipids, phosphatidylserine and sphingolipids. In Homo sapiens (Human), this protein is Serine incorporator 4 (SERINC4).